Here is a 249-residue protein sequence, read N- to C-terminus: Vacuolar iron transporter 1 (249 aa).

The Cytoplasmic portion of the chain corresponds to 1–36 (MADGANDGGNPGAEEQQRLLDQHKEAHFTAGEIVRD). A helical transmembrane segment spans residues 37–57 (IIIGVSDGLTVPFALAAGLSG). Residues 58–63 (ANASSS) lie on the Vacuolar side of the membrane. A helical transmembrane segment spans residues 64 to 84 (IVLTAGIAEVAAGAISMGLGG). Topologically, residues 85–170 (YLAAKSEADN…PKRALQSAFT (86 aa)) are cytoplasmic. The tract at residues 90 to 165 (SEADNYAREL…LEKPDPKRAL (76 aa)) is cytoplasmic metal binding domain (MBD). 6 residues coordinate Fe cation: glutamate 102, glutamate 105, glutamate 113, glutamate 116, methionine 149, and glutamate 153. The chain crosses the membrane as a helical span at residues 171–191 (IAIAYVLGGLVPLIPYMFIPV). Over 192–194 (ARK) the chain is Vacuolar. Residues 195–215 (AVVASVILTLMALLIFGYAKG) form a helical membrane-spanning segment. The Cytoplasmic segment spans residues 216 to 226 (YFTDNKPFKSA). A helical membrane pass occupies residues 227 to 247 (LQTALIGAIASAAAFGMAKAV). Topologically, residues 248 to 249 (QS) are vacuolar.

Belongs to the CCC1 family. As to quaternary structure, homodimer. The dimeric interaction is mediated by both the transmembrane domains (TMDs) and the cytoplasmic metal binding domain (MBD).

It is found in the vacuole membrane. The catalysed reaction is Fe(2+)(in) = Fe(2+)(out). Transport of iron ions is inhibited by zinc ions. Functionally, vacuolar iron transporter involved in the transfer of iron ions from the cytosol to the vacuole for intracellular iron storage. Can transport cobalt ions from the cytosol to the vacuole. The chain is Vacuolar iron transporter 1 from Eucalyptus grandis (Flooded gum).